A 66-amino-acid polypeptide reads, in one-letter code: MKKGIHPEYVKCQVKCTCGHEFEILSTKESLRVEVCDKCHPFYTGQERNIDRGGKVDKFKKKYGLA.

4 residues coordinate Zn(2+): Cys-16, Cys-18, Cys-36, and Cys-39.

This sequence belongs to the bacterial ribosomal protein bL31 family. Type A subfamily. As to quaternary structure, part of the 50S ribosomal subunit. Zn(2+) is required as a cofactor.

Binds the 23S rRNA. The sequence is that of Large ribosomal subunit protein bL31 from Nautilia profundicola (strain ATCC BAA-1463 / DSM 18972 / AmH).